The chain runs to 305 residues: tRNA N6-adenosine threonylcarbamoyltransferase (305 aa).

Fe cation contacts are provided by His108 and His112. Residues 130–134 (VVSGG), Asp163, Gly176, Asp180, and Asn264 each bind substrate. Residue Asp288 participates in Fe cation binding.

The protein belongs to the KAE1 / TsaD family. Fe(2+) serves as cofactor.

It localises to the cytoplasm. The enzyme catalyses L-threonylcarbamoyladenylate + adenosine(37) in tRNA = N(6)-L-threonylcarbamoyladenosine(37) in tRNA + AMP + H(+). Its function is as follows. Required for the formation of a threonylcarbamoyl group on adenosine at position 37 (t(6)A37) in tRNAs that read codons beginning with adenine. Is involved in the transfer of the threonylcarbamoyl moiety of threonylcarbamoyl-AMP (TC-AMP) to the N6 group of A37, together with TsaE and TsaB. TsaD likely plays a direct catalytic role in this reaction. The sequence is that of tRNA N6-adenosine threonylcarbamoyltransferase from Mycoplasma mobile (strain ATCC 43663 / 163K / NCTC 11711) (Mesomycoplasma mobile).